A 348-amino-acid chain; its full sequence is MKPIQSPSGVASPMKNRLRKRPDLSLPLPHRDVALAVPLPLPPPSSSSSAPASSSAISTNISAAKSLSELERVNRIGSGAGGTVYKVIHTPTSRPFALKVIYGNHEDTVRRQICREIEILRSVDHPNVVKCHDMFDHNGEIQVLLEFMDQGSLEGAHIWQEQELADLSRQILSGLAYLHRRHIVHRDIKPSNLLINSAKNVKIADFGVSRILAQTMDPCNSSVGTIAYMSPERINTDLNHGRYDGYAGDVWSLGVSILEFYLGRFPFAVSRQGDWASLMCAICMSQPPEAPATASQEFRHFVSCCLQSDPPKRWSAQQLLQHPFILKATGGPNLRQMLPPPRPLPSAS.

Disordered stretches follow at residues 1 to 26 (MKPI…DLSL) and 35 to 54 (LAVP…PASS). At S6 the chain carries Phosphoserine; by ASK7. Residues 70–325 (LERVNRIGSG…AQQLLQHPFI (256 aa)) form the Protein kinase domain. ATP-binding positions include 76–84 (IGSGAGGTV) and K99. The Proton acceptor role is filled by D187. A Phosphothreonine modification is found at T215. Phosphoserine; by ASK7 is present on S221. S221 is modified (phosphoserine). Position 225 is a phosphothreonine; by ASK7 (T225). ADP-ribosylarginine; by HopF2 is present on R313.

It belongs to the protein kinase superfamily. STE Ser/Thr protein kinase family. MAP kinase kinase subfamily. Interacts with P.syringae type III effector HopF2. Interacts with BZR1. Interacts with MPK6 and MPK3. Interacts with RACK1A, RACK1B and RACK1C. Interacts with MAPKKK5 mainly in the cytosol. Binds to BASL. Interacts with MAPKKK20. Post-translationally, phosphorylation at Thr-215 and Ser-221 by MAP kinase kinase kinases positively regulates kinase activity. Phosphorylated by MAPKKK5 and MAPKKK20 in response to abscisic acid (ABA). ADP-ribosylation at Arg-313 by P.syringae type III effector HopF2 reduces the ability of the protein to phosphorylate downstream MPK6. As to expression, expressed higher in stems and leaves than in flowers and roots.

It carries out the reaction L-seryl-[protein] + ATP = O-phospho-L-seryl-[protein] + ADP + H(+). The enzyme catalyses L-threonyl-[protein] + ATP = O-phospho-L-threonyl-[protein] + ADP + H(+). It catalyses the reaction L-tyrosyl-[protein] + ATP = O-phospho-L-tyrosyl-[protein] + ADP + H(+). With respect to regulation, activated through serine and threonine phosphorylation by MEKK1 and MAPKKK20 in response to abscisic acid (ABA). Inhibited through phosphorylation by GSK3/Shaggy-like kinase ASKs. Inhibited through ADP-Ribosylation by P.syringae HopF2. Activated after high light stress. Functionally, mitogen-activated protein kinase kinase (MAPKK) which regulates abscisic acid (ABA) responses in a MAPKKK20-MKK5-MPK6 cascade involved in root growth (e.g. root cell division and elongation) and stomatal response, probably via MAPK6 activation by protein phosphorylation. Involved in the second phase of hydrogen peroxide generation during hypersensitive response-like cell death. Involved in the innate immune MAP kinase signaling cascade (MEKK1, MKK4/MKK5 and MPK3/MPK6) downstream of bacterial flagellin receptor FLS2. Activates by phosphorylation the downstream MPK3 and MPK6. YDA-MKK4/MKK5-MPK3/MPK6 module regulates stomatal cell fate before the guard mother cell (GMC) is specified. This MAPK cascade also functions downstream of the ER receptor in regulating coordinated local cell proliferation, which shapes the morphology of plant organs. MKK4 and MKK5 participate in the regulation of floral organ abscission. Target of the Pseudomonas syringae type III effector HopF2, that inhibits the activation of the downstream MPK6 and PAMP-triggered immunity. Plays a critical role in high light stress tolerance by the mediation of the Cu/Zn SODs CSD1 and CSD2 gene expression. Phosphorylates BZR1 in vitro. In Arabidopsis thaliana (Mouse-ear cress), this protein is Mitogen-activated protein kinase kinase 5.